The primary structure comprises 306 residues: uncharacterized protein (306 aa).

To M.jannaschii MJ0658.

This is an uncharacterized protein from Methanothermobacter thermautotrophicus (strain ATCC 29096 / DSM 1053 / JCM 10044 / NBRC 100330 / Delta H) (Methanobacterium thermoautotrophicum).